The following is a 215-amino-acid chain: Beta-crystallin A3 (215 aa).

Residue Met1 is modified to N-acetylmethionine. Residues 1–16 (METQAEQQELETLPTT) are compositionally biased toward low complexity. The disordered stretch occupies residues 1 to 29 (METQAEQQELETLPTTKMAQTNPTPGSLG). Residues 1-30 (METQAEQQELETLPTTKMAQTNPTPGSLGP) form an N-terminal arm region. Position 2 is an N-acetylalanine (Glu2). Beta/gamma crystallin 'Greek key' domains follow at residues 31-70 (WKIT…KVES) and 71-117 (GAWI…RPIC). S-glutathionyl cysteine; alternate is present on residues Cys82 and Cys117. An S-methylcysteine; alternate mark is found at Cys82 and Cys117. The tract at residues 118 to 123 (SANHKE) is connecting peptide. 2 Beta/gamma crystallin 'Greek key' domains span residues 124-165 (SKMT…KIQS) and 166-214 (GAWV…RRIQ). Cys185 carries the S-methylcysteine modification.

It belongs to the beta/gamma-crystallin family. As to quaternary structure, homo/heterodimer, or complexes of higher-order. The structure of beta-crystallin oligomers seems to be stabilized through interactions between the N-terminal arms. Interacts with CRYBA1. Specific cleavages in the N-terminal arm occur during lens maturation and give rise to several truncated forms. Cleavages do not seem to have adverse effects on solubility. In terms of processing, S-methylation and glutathionylation occur in normal young lenses and do not seem to be detrimental.

Functionally, crystallins are the dominant structural components of the vertebrate eye lens. The polypeptide is Beta-crystallin A3 (Homo sapiens (Human)).